A 668-amino-acid chain; its full sequence is MNPSTHVSSNGPTTPPHGPHTTFLPPTSPAPSTSSVAAATLCSPQRQAVSRYSGWSTEYTQWHSDLTTELLWHAHPRQVPMDEALAAAAAASYQVNPQHPANRYRHYEFQTLSLGTSEVDELLNCCAEETTCGGTQSTVLTNATNTTSCGGAVAGSSNAGPAGASAACDLDAELAGLETSAADFEQLRRLCAPLAIDTRCNLCAIISICLKQDCDQSWLLEYSLLCFKCSYAPRAALSTLIIMSEFTHLLQQHFSDLRIDDLFRHHVLTVFDFHLHFFINRCFEKQVGDAVDNENVTLNHLAVVRAMVMGEDTVPYNKPRRHPQQKQKNNPYHVEVPQELIDNFLEHSSPSRDRFVQLLFYMWAGTGVMSTTPLTELTHTKFARLDALSTASEREDARMMMEEEEDEEGGEKGGDDPGRHNGGGTSGGFSESTLKKNVGPIYLCPVPAFFTKNQTSTVCLLCELMACSYYDNVVLRELYRRVVSYCQNNVKMVDRIQLVLADLLRECTSPLGAAHEDVARCGLEAPTSPGGDSDYHGLSGVDGALARPDPVFCHVLRQAGVTGIYKHFFCDPQCAGNIRVTNEAVLFGHLHPHHVQEVKLAICHDNYYISRLPRRVWLCITLFKAFQITKRTYKGKVHLADFMRDFTQLLENCDIKLVDPTYVIDKYV.

Residues 1–10 show a composition bias toward polar residues; the sequence is MNPSTHVSSN. The segment at 1 to 35 is disordered; sequence MNPSTHVSSNGPTTPPHGPHTTFLPPTSPAPSTSS. The span at 19–35 shows a compositional bias: low complexity; the sequence is PHTTFLPPTSPAPSTSS. Zn(2+) is bound by residues Cys200, Cys203, His276, and Cys282. Positions 200 to 282 are zinc finger 1; that stretch reads CNLCAIISIC…FHLHFFINRC (83 aa). Basic and acidic residues-rich tracts occupy residues 392–401 and 410–419; these read SEREDARMMM and GEKGGDDPGR. Residues 392–430 form a disordered region; that stretch reads SEREDARMMMEEEEDEEGGEKGGDDPGRHNGGGTSGGFS. Positions 459, 462, 567, and 574 each coordinate Zn(2+). A zinc finger 2 region spans residues 459-574; that stretch reads CLLCELMACS…YKHFFCDPQC (116 aa).

The protein belongs to the herpesviridae UL32 protein family.

The protein resides in the host cytoplasm. It localises to the host nucleus. Its function is as follows. Plays a role in efficient localization of neo-synthesized capsids to nuclear replication compartments, thereby controlling cleavage and packaging of virus genomic DNA. This is Packaging protein UL32 homolog (UL52) from Homo sapiens (Human).